A 75-amino-acid chain; its full sequence is Acylphosphatase-like protein MJ1405 (75 aa).

The Acylphosphatase-like domain occupies threonine 8–lysine 75.

This chain is Acylphosphatase-like protein MJ1405, found in Methanocaldococcus jannaschii (strain ATCC 43067 / DSM 2661 / JAL-1 / JCM 10045 / NBRC 100440) (Methanococcus jannaschii).